A 283-amino-acid polypeptide reads, in one-letter code: Pantoate--beta-alanine ligase (283 aa).

It belongs to the pantothenate synthetase family.

The catalysed reaction is (R)-pantoate + beta-alanine + ATP = (R)-pantothenate + AMP + diphosphate + H(+). Its pathway is cofactor biosynthesis; (R)-pantothenate biosynthesis; (R)-pantothenate from (R)-pantoate and beta-alanine: step 1/1. This is Pantoate--beta-alanine ligase (pan6) from Schizosaccharomyces pombe (strain 972 / ATCC 24843) (Fission yeast).